The chain runs to 134 residues: uncharacterized protein (134 aa).

This is an uncharacterized protein from Archaeoglobus fulgidus (strain ATCC 49558 / DSM 4304 / JCM 9628 / NBRC 100126 / VC-16).